Here is a 348-residue protein sequence, read N- to C-terminus: Phosphoribosylformylglycinamidine cyclo-ligase (348 aa).

It belongs to the AIR synthase family.

It localises to the cytoplasm. It carries out the reaction 2-formamido-N(1)-(5-O-phospho-beta-D-ribosyl)acetamidine + ATP = 5-amino-1-(5-phospho-beta-D-ribosyl)imidazole + ADP + phosphate + H(+). Its pathway is purine metabolism; IMP biosynthesis via de novo pathway; 5-amino-1-(5-phospho-D-ribosyl)imidazole from N(2)-formyl-N(1)-(5-phospho-D-ribosyl)glycinamide: step 2/2. This is Phosphoribosylformylglycinamidine cyclo-ligase from Cereibacter sphaeroides (strain ATCC 17029 / ATH 2.4.9) (Rhodobacter sphaeroides).